The following is an 840-amino-acid chain: Phosphatidylglycerol lysyltransferase (840 aa).

The Cytoplasmic segment spans residues 1–8; the sequence is MTQELKSK. The helical transmembrane segment at 9 to 29 threads the bilayer; the sequence is LLSFFKFIFATALFIFVIFTL. At 30–52 the chain is on the extracellular side; the sequence is YRELSHINFKETFIQFGKINRLW. The chain crosses the membrane as a helical span at residues 53-73; that stretch reads LVLLFAGGGLSLILLSLYDII. The Cytoplasmic segment spans residues 74 to 89; that stretch reads LVKALKLKMPLIRVFR. Residues 90-110 traverse the membrane as a helical segment; that stretch reads VSYIINALNSIIGFGGFIGAG. Residues 111 to 129 are Extracellular-facing; sequence VRAFVYKNYTNDTKKLVQY. A helical membrane pass occupies residues 130–150; that stretch reads ISIILVSMLTGLSLLSILVVL. Residues 151 to 161 lie on the Cytoplasmic side of the membrane; it reads RIFNASHMIDE. A helical transmembrane segment spans residues 162-182; sequence ISWVRWILYIVALFLPIFIFY. Residues 183–200 are Extracellular-facing; sequence TVARPVDRNNRYMGVYCT. A helical transmembrane segment spans residues 201–221; that stretch reads VVSCVEWMAAATVLYFAALIV. The Cytoplasmic segment spans residues 222-229; sequence DIHISFMT. A helical transmembrane segment spans residues 230 to 250; that stretch reads FVGIFVIAALSGLVSFIPGGF. At 251–270 the chain is on the extracellular side; it reads GAFDLVVLLGLKSLGISEEK. A helical transmembrane segment spans residues 271–291; that stretch reads ILLALVLYRFAYYFVPVMIAL. Topologically, residues 292–337 are cytoplasmic; sequence ILSSFEFGNTAKKYLDNSKYFIPVKDFTSFLRSYQKDILAKVPSFS. A helical membrane pass occupies residues 338 to 358; sequence LAILIFLTSIIFFINNLTIVY. The Extracellular segment spans residues 359-366; the sequence is DGLYDGNH. Residues 367–387 form a helical membrane-spanning segment; the sequence is FAYYIALAIQTSACLLLILNV. The Cytoplasmic portion of the chain corresponds to 388–392; sequence RGIYK. A helical transmembrane segment spans residues 393 to 413; that stretch reads GSRRAIIYAFISIILIASATI. The Extracellular portion of the chain corresponds to 414–415; it reads YT. A helical membrane pass occupies residues 416–436; the sequence is YASFLLLSWLIIIFVLLILAY. Residues 437 to 450 are Cytoplasmic-facing; sequence QRAQVLKRPLRFKK. A helical membrane pass occupies residues 451-471; it reads LAFMLLLSIFILYLNHILISG. Over 472-489 the chain is Extracellular; that stretch reads TLYALDVYHIEIDTSLLR. The chain crosses the membrane as a helical span at residues 490–510; that stretch reads YYFWMTIVIIMLLVGVIAWLF. Topologically, residues 511-840 are cytoplasmic; that stretch reads DYKYKRPHHS…LKVMRVIRHK (330 aa).

It belongs to the LPG synthase family.

Its subcellular location is the cell membrane. It carries out the reaction L-lysyl-tRNA(Lys) + a 1,2-diacyl-sn-glycero-3-phospho-(1'-sn-glycerol) = a 1,2-diacyl-sn-glycero-3-phospho-1'-(3'-O-L-lysyl)-sn-glycerol + tRNA(Lys). Functionally, catalyzes the transfer of a lysyl group from L-lysyl-tRNA(Lys) to membrane-bound phosphatidylglycerol (PG), which produces lysylphosphatidylglycerol (LPG), a major component of the bacterial membrane with a positive net charge. LPG synthesis contributes to bacterial virulence as it is involved in the resistance mechanism against cationic antimicrobial peptides (CAMP) produces by the host's immune system (defensins, cathelicidins) and by the competing microorganisms (bacteriocins). In fact, the modification of anionic phosphatidylglycerol with positively charged L-lysine results in repulsion of the peptides. The polypeptide is Phosphatidylglycerol lysyltransferase (mprF) (Staphylococcus epidermidis (strain ATCC 35984 / DSM 28319 / BCRC 17069 / CCUG 31568 / BM 3577 / RP62A)).